The following is a 185-amino-acid chain: Virulence membrane protein PagC (185 aa).

Positions 1-23 (MKNIILSTLVITTSVLVVNVAQA) are cleaved as a signal peptide.

It belongs to the outer membrane OOP (TC 1.B.6) superfamily. Ail family.

The protein resides in the cell outer membrane. Essential for full virulence and survival within macrophages. In Salmonella typhimurium (strain LT2 / SGSC1412 / ATCC 700720), this protein is Virulence membrane protein PagC (pagC).